A 154-amino-acid chain; its full sequence is Transcriptional repressor NrdR (154 aa).

The segment at 3-34 is a zinc-finger region; sequence CPFCGANDTKVIDSRLVAEGEQVRRRRECVAC. The ATP-cone domain maps to 49–139; it reads PRLIKQDGTR…VYRRFQDLDE (91 aa).

This sequence belongs to the NrdR family. Requires Zn(2+) as cofactor.

Functionally, negatively regulates transcription of bacterial ribonucleotide reductase nrd genes and operons by binding to NrdR-boxes. The sequence is that of Transcriptional repressor NrdR from Pseudomonas entomophila (strain L48).